A 311-amino-acid polypeptide reads, in one-letter code: MFKYTLLFPGQNDINRKKILSPFFSKNKIVQSIFRESSEYIGYDIWKLIQDDPKKKLKNNKYSQLVTLVSSIAIYELWKNKQCTHPNLVIGHSLGEYTALVCSQSLKLSDAIQLIITRYKFMMEAMSKKIGLMTAIIGLNERTIRKLLKKYDYSHEVSIACINTDNQIVLSGERNSVKHINLHCKKAGAKNIINLYIHPPSHCTLMKKASKKLLYVLKHTTFKIPIYPVISSTSLKFQNSEQAIRISLAKQIYSTVRWNSIIKYIKKDIFIFLEVSTKSILTNLNKNIIKKSLSISLNCQANFLKALKIIL.

Residues serine 93 and histidine 202 contribute to the active site.

This sequence belongs to the FabD family.

It catalyses the reaction holo-[ACP] + malonyl-CoA = malonyl-[ACP] + CoA. The protein operates within lipid metabolism; fatty acid biosynthesis. The sequence is that of Malonyl CoA-acyl carrier protein transacylase (fabD) from Buchnera aphidicola subsp. Baizongia pistaciae (strain Bp).